Consider the following 292-residue polypeptide: Imipenem-hydrolyzing beta-lactamase (292 aa).

The first 27 residues, 1-27 (MSLNVKQSRIAILFSSCLISISFFSQA), serve as a signal peptide directing secretion. A disulfide bond links Cys-70 and Cys-240. Residue Ser-71 is the Acyl-ester intermediate of the active site. 236 to 238 (KTG) is a substrate binding site.

Belongs to the class-A beta-lactamase family.

The catalysed reaction is a beta-lactam + H2O = a substituted beta-amino acid. Its function is as follows. Hydrolyzes carbapenems such as imipenem, which are extended-spectrum beta-lactam antibiotics. The protein is Imipenem-hydrolyzing beta-lactamase (nmcA) of Enterobacter cloacae.